The chain runs to 251 residues: Zinc import ATP-binding protein ZnuC (251 aa).

Residues 5-220 (VSLENVSVSF…PEFISMFGPR (216 aa)) form the ABC transporter domain. Residue 37-44 (GPNGAGKS) coordinates ATP.

Belongs to the ABC transporter superfamily. Zinc importer (TC 3.A.1.15.5) family. In terms of assembly, the complex is composed of two ATP-binding proteins (ZnuC), two transmembrane proteins (ZnuB) and a solute-binding protein (ZnuA).

It localises to the cell inner membrane. The catalysed reaction is Zn(2+)(out) + ATP(in) + H2O(in) = Zn(2+)(in) + ADP(in) + phosphate(in) + H(+)(in). Part of the ABC transporter complex ZnuABC involved in zinc import. Responsible for energy coupling to the transport system. In Salmonella typhi, this protein is Zinc import ATP-binding protein ZnuC.